We begin with the raw amino-acid sequence, 314 residues long: Homoserine O-acetyltransferase (314 aa).

Cys142 serves as the catalytic Acyl-thioester intermediate. Positions 163 and 192 each coordinate substrate. The active-site Proton acceptor is His235. The active site involves Glu237. Substrate is bound at residue Arg249.

This sequence belongs to the MetA family.

It is found in the cytoplasm. The enzyme catalyses L-homoserine + acetyl-CoA = O-acetyl-L-homoserine + CoA. It participates in amino-acid biosynthesis; L-methionine biosynthesis via de novo pathway; O-acetyl-L-homoserine from L-homoserine: step 1/1. In terms of biological role, transfers an acetyl group from acetyl-CoA to L-homoserine, forming acetyl-L-homoserine. In Streptococcus pneumoniae (strain Taiwan19F-14), this protein is Homoserine O-acetyltransferase.